A 481-amino-acid chain; its full sequence is Abietadienol/abietadienal oxidase (481 aa).

The helical transmembrane segment at 2-22 (ADQISLLLVVFTAAVALLHLI) threads the bilayer. Cys430 provides a ligand contact to heme.

This sequence belongs to the cytochrome P450 family. Heme is required as a cofactor. As to expression, expressed in young tissues such as flushing buds and green bark tissues. Lower levels in mature needles and bark.

Its subcellular location is the membrane. It catalyses the reaction abieta-7,13-dien-18-ol + 2 reduced [NADPH--hemoprotein reductase] + 2 O2 = abieta-7,13-dien-18-oate + 2 oxidized [NADPH--hemoprotein reductase] + 3 H2O + 3 H(+). Functionally, multifunctional and multisubstrate cytochrome P450 that oxidizes the respective carbon 18 of abietadienol, abietadienal, levopimaradienol, isopimara-7,15-dienol, isopimara-7,15-dienal, dehydroabietadienol, and dehydroabietadienal. In Pinus taeda (Loblolly pine), this protein is Abietadienol/abietadienal oxidase (CYP720B1).